Reading from the N-terminus, the 706-residue chain is Elongation factor G (706 aa).

The tr-type G domain occupies 15-291; sequence LKTRNIGISA…GVLDYLASPV (277 aa). GTP contacts are provided by residues 24-31, 91-95, and 145-148; these read AHIDSGKT, DTPGH, and NKLD.

The protein belongs to the TRAFAC class translation factor GTPase superfamily. Classic translation factor GTPase family. EF-G/EF-2 subfamily.

Its subcellular location is the cytoplasm. In terms of biological role, catalyzes the GTP-dependent ribosomal translocation step during translation elongation. During this step, the ribosome changes from the pre-translocational (PRE) to the post-translocational (POST) state as the newly formed A-site-bound peptidyl-tRNA and P-site-bound deacylated tRNA move to the P and E sites, respectively. Catalyzes the coordinated movement of the two tRNA molecules, the mRNA and conformational changes in the ribosome. This is Elongation factor G from Leptospira borgpetersenii serovar Hardjo-bovis (strain L550).